Here is a 261-residue protein sequence, read N- to C-terminus: GTP cyclohydrolase FolE2 (261 aa).

It belongs to the GTP cyclohydrolase IV family.

It catalyses the reaction GTP + H2O = 7,8-dihydroneopterin 3'-triphosphate + formate + H(+). It participates in cofactor biosynthesis; 7,8-dihydroneopterin triphosphate biosynthesis; 7,8-dihydroneopterin triphosphate from GTP: step 1/1. Converts GTP to 7,8-dihydroneopterin triphosphate. This Fervidobacterium nodosum (strain ATCC 35602 / DSM 5306 / Rt17-B1) protein is GTP cyclohydrolase FolE2.